The primary structure comprises 538 residues: Growth factor receptor-bound protein 14 (538 aa).

The segment at 1 to 20 (MTTSLQDGQSAAGRAGAQDS) is disordered. Residue Thr2 is modified to N-acetylthreonine. Positions 104 to 190 (KKQVIKVYSE…NKLYLRKNYA (87 aa)) constitute a Ras-associating domain. The PH domain occupies 232–340 (YPEIHGFLHA…WVTAIRLLKD (109 aa)). A phosphoserine mark is found at Ser370 and Ser373. The SH2 domain maps to 437 to 533 (WFHHRISRDE…VLPCKLKHYC (97 aa)).

Belongs to the GRB7/10/14 family. In terms of assembly, interacts with the cytoplasmic domain of the autophosphorylated insulin receptor, through the SH2 domain. Interacts with GRB14 (via BPS domain); this interaction protects the tyrosines in the activation loop on INSR from dephosphorylation. Binds to the ankyrin repeat region of TNKS2 via its N-terminus. Interacts with activated NRAS. Interacts (via SH2 domain) with TEK/TIE2 (tyrosine phosphorylated). Post-translationally, phosphorylated on serine residues. Phosphorylated on tyrosine residues by TEK/TIE2.

The protein resides in the cytoplasm. The protein localises to the endosome membrane. Functionally, adapter protein which modulates coupling of cell surface receptor kinases with specific signaling pathways. Binds to, and suppresses signals from, the activated insulin receptor (INSR). Potent inhibitor of insulin-stimulated MAPK3 phosphorylation. Plays a critical role regulating PDPK1 membrane translocation in response to insulin stimulation and serves as an adapter protein to recruit PDPK1 to activated insulin receptor, thus promoting PKB/AKT1 phosphorylation and transduction of the insulin signal. The sequence is that of Growth factor receptor-bound protein 14 (Grb14) from Mus musculus (Mouse).